We begin with the raw amino-acid sequence, 316 residues long: Pantothenate kinase (316 aa).

95–102 (GSVAVGKS) is a binding site for ATP.

This sequence belongs to the prokaryotic pantothenate kinase family.

Its subcellular location is the cytoplasm. The catalysed reaction is (R)-pantothenate + ATP = (R)-4'-phosphopantothenate + ADP + H(+). It functions in the pathway cofactor biosynthesis; coenzyme A biosynthesis; CoA from (R)-pantothenate: step 1/5. The polypeptide is Pantothenate kinase (Shewanella sp. (strain ANA-3)).